A 188-amino-acid polypeptide reads, in one-letter code: Kappa-casein (188 aa).

An N-terminal signal peptide occupies residues 1–21; that stretch reads MMKSSFLIVPILALTLPFLGA. 2 O-linked (GalNAc...) threonine glycosylation sites follow: T143 and T148. The residue at position 163 (T163) is a Phosphothreonine. S167 bears the Phosphoserine; alternate mark. Residue S167 is glycosylated (O-linked (GalNAc...) serine; alternate). An O-linked (GalNAc...) threonine glycan is attached at T184. S185 is modified (phosphoserine).

The protein belongs to the kappa-casein family. In terms of tissue distribution, mammary gland specific. Secreted in milk.

It is found in the secreted. Kappa-casein stabilizes micelle formation, preventing casein precipitation in milk. In Sus scrofa (Pig), this protein is Kappa-casein (CSN3).